The sequence spans 425 residues: Cyanogenic beta-glucosidase (425 aa).

The signal sequence occupies residues 1–11 (LLSITTTHIHA). Residues Gln-44, His-148, and 193-194 (NE) each bind a beta-D-glucoside. Residue Glu-194 is the Proton donor of the active site. Cys-213 and Cys-221 form a disulfide bridge. N-linked (GlcNAc...) asparagine glycosylation is present at Asn-220. A beta-D-glucoside-binding residues include Tyr-337 and Glu-408. The active-site Nucleophile is Glu-408. Asn-412 carries N-linked (GlcNAc...) asparagine glycosylation.

This sequence belongs to the glycosyl hydrolase 1 family. In terms of assembly, homodimer. Leaves.

It catalyses the reaction Hydrolysis of terminal, non-reducing beta-D-glucosyl residues with release of beta-D-glucose.. Its function is as follows. Hydrolyzes cyanoglucosides, contributing to the release of hydrocyanic acid, which functions as a defense mechanism against small predators, when the leaf tissue is damaged. In Trifolium repens (Creeping white clover), this protein is Cyanogenic beta-glucosidase (LI).